The following is a 612-amino-acid chain: MKSNLSLKRQDEKRADKEPNLYTLQGVIQYLQYEAFKNERDHNLWEIERAELKIRVAQLERERAKLEQSLSFQQRRAEMLEKSLRELRKDKNISVKDLDEFHLLDKPAANNTKADAEACLLKSKNYIKKSLQEIVYLTNMQPNVSWNVLQEPTRGIKVPKESNNTQQNNQFVMEPSQNKGNVNDANFFEVEYARNENMNKLSSSELISDDLLEDEIMKPLSSGESLPKKEEEVTKSPSFTLDDSVASNEQTLAQLNIESPVDQKKSKAKKKKEQKWTLKFESDKGTSTQCITHQPLPGSTPSFASGTENGVINVWRLDEDSNDNSMGIIKPHLTFYGHEGPVLCVCVPKATHHIFSGGHDGTIRCWSLPANQTSDSISKILTGSTIFQGHEDCVWELFCHEVKDNNPILLSLSSDGTVRGWKYTGEQLFKIRCDSKQPLSMSVTDSRIAIAYNDGNVRFYDLDTQILVSQMRIAGNSAIGNPAVKDRINKIVWKNGNPDRLYSLHENGMVRVFDVKSEELLAEKSISKVSLTGIAFAVNRPEFAISASDGRVFFLRQDDKLSTLESLPSREAQEEITDLSDILWINSPVDKLEHLIVGCKERISVYDRKYLP.

Positions 39-100 (ERDHNLWEIE…KNISVKDLDE (62 aa)) form a coiled coil. The tract at residues 219-241 (PLSSGESLPKKEEEVTKSPSFTL) is disordered. WD repeat units lie at residues 286–325 (TSTQ…NDNS), 337–376 (GHEG…TSDS), 389–432 (GHED…FKIR), 434–470 (DSKQ…LVSQ), 483–523 (AVKD…LLAE), 526–565 (ISKV…STLE), and 574–612 (EEIT…KYLP).

It localises to the cytoplasm. This is an uncharacterized protein from Schizosaccharomyces pombe (strain 972 / ATCC 24843) (Fission yeast).